The sequence spans 191 residues: Ion-translocating oxidoreductase complex subunit B (191 aa).

The hydrophobic stretch occupies residues 1–26 (MSSLWIAIAAVSAIALVSGLILGFAA). The 59-residue stretch at 32-90 (EADPIVERIDALLPQSQCGQCGYPGCRPYAEAVANGEKINRCAPGGEAVMRNIAALLAV) folds into the 4Fe-4S domain. Positions 49, 52, 57, 73, 116, 119, 122, 126, 146, 149, 152, and 156 each coordinate [4Fe-4S] cluster. 4Fe-4S ferredoxin-type domains follow at residues 107-136 (QVAL…GATR) and 137-166 (ALHT…LVPV).

Belongs to the 4Fe4S bacterial-type ferredoxin family. RnfB subfamily. The complex is composed of six subunits: RnfA, RnfB, RnfC, RnfD, RnfE and RnfG. It depends on [4Fe-4S] cluster as a cofactor.

It is found in the cell inner membrane. Part of a membrane-bound complex that couples electron transfer with translocation of ions across the membrane. This is Ion-translocating oxidoreductase complex subunit B from Edwardsiella ictaluri (strain 93-146).